A 1935-amino-acid chain; its full sequence is Myosin-7 (1935 aa).

In terms of domain architecture, Myosin N-terminal SH3-like spans 32–81 (DLKKDVFVPDDKQEFVKAKIVSREGGKVTAETEYGKTVTVKEDQVMQQNP). A Myosin motor domain is found at 85 to 778 (DKIEDMAMLT…LLGLLEEMRD (694 aa)). Position 129 is an N6,N6,N6-trimethyllysine (K129). 178 to 185 (GESGAGKT) contacts ATP. Phosphothreonine is present on T378. Actin-binding stretches follow at residues 655–677 (LNKL…IPNE) and 757–771 (KFGH…GLLG). In terms of domain architecture, IQ spans 781 to 810 (LSRIITRIQAQSRGVLARMEYKKLLERRDS). A coiled-coil region spans residues 839–1935 (LLKSAEREKE…DIGTKGLNEE (1097 aa)). S1137 and S1269 each carry phosphoserine. T1282 is subject to Phosphothreonine. At Y1308 the chain carries Phosphotyrosine. Residue T1309 is modified to Phosphothreonine. Residue S1510 is modified to Phosphoserine. Residue T1513 is modified to Phosphothreonine. The disordered stretch occupies residues 1907-1935 (EERADIAESQVNKLRAKSRDIGTKGLNEE). Basic and acidic residues predominate over residues 1923 to 1935 (KSRDIGTKGLNEE).

It belongs to the TRAFAC class myosin-kinesin ATPase superfamily. Myosin family. In terms of assembly, muscle myosin is a hexameric protein that consists of 2 heavy chain subunits (MHC), 2 alkali light chain subunits (MLC) and 2 regulatory light chain subunits (MLC-2). Interacts with ECPAS. Interacts (via C-terminus) with LRRC39. In terms of tissue distribution, both wild type and variant Gln-403 are detected in skeletal muscle (at protein level).

The protein resides in the cytoplasm. Its subcellular location is the myofibril. The protein localises to the sarcomere. Its function is as follows. Myosins are actin-based motor molecules with ATPase activity essential for muscle contraction. Forms regular bipolar thick filaments that, together with actin thin filaments, constitute the fundamental contractile unit of skeletal and cardiac muscle. The protein is Myosin-7 (MYH7) of Homo sapiens (Human).